The following is a 345-amino-acid chain: Phosphoribosylformylglycinamidine cyclo-ligase (345 aa).

The protein belongs to the AIR synthase family.

The protein resides in the cytoplasm. The catalysed reaction is 2-formamido-N(1)-(5-O-phospho-beta-D-ribosyl)acetamidine + ATP = 5-amino-1-(5-phospho-beta-D-ribosyl)imidazole + ADP + phosphate + H(+). The protein operates within purine metabolism; IMP biosynthesis via de novo pathway; 5-amino-1-(5-phospho-D-ribosyl)imidazole from N(2)-formyl-N(1)-(5-phospho-D-ribosyl)glycinamide: step 2/2. This is Phosphoribosylformylglycinamidine cyclo-ligase from Shewanella sp. (strain ANA-3).